The primary structure comprises 238 residues: 7-carboxy-7-deazaguanine synthase (238 aa).

Substrate-binding positions include 14–16 and Arg-29; that span reads IQG. A Radical SAM core domain is found at 20–234; sequence VVGQKTMFIR…PQLHALVWGN (215 aa). [4Fe-4S] cluster contacts are provided by Cys-33, Cys-37, and Cys-40. Ser-42 lines the Mg(2+) pocket. Ser-80 provides a ligand contact to substrate. S-adenosyl-L-methionine is bound by residues Gly-82 and 126–128; that span reads SPK.

The protein belongs to the radical SAM superfamily. 7-carboxy-7-deazaguanine synthase family. In terms of assembly, homodimer. [4Fe-4S] cluster serves as cofactor. It depends on S-adenosyl-L-methionine as a cofactor. The cofactor is Mg(2+).

The catalysed reaction is 6-carboxy-5,6,7,8-tetrahydropterin + H(+) = 7-carboxy-7-deazaguanine + NH4(+). The protein operates within purine metabolism; 7-cyano-7-deazaguanine biosynthesis. In terms of biological role, catalyzes the complex heterocyclic radical-mediated conversion of 6-carboxy-5,6,7,8-tetrahydropterin (CPH4) to 7-carboxy-7-deazaguanine (CDG), a step common to the biosynthetic pathways of all 7-deazapurine-containing compounds. The sequence is that of 7-carboxy-7-deazaguanine synthase from Bacillus cereus (strain ATCC 14579 / DSM 31 / CCUG 7414 / JCM 2152 / NBRC 15305 / NCIMB 9373 / NCTC 2599 / NRRL B-3711).